Consider the following 291-residue polypeptide: Sesquiterpene cyclase astC (291 aa).

Belongs to the HAD-like hydrolase superfamily.

It catalyses the reaction (2E,6E)-farnesyl diphosphate = (S,S)-drim-8-en-11-yl diphosphate. Its pathway is secondary metabolite biosynthesis; terpenoid biosynthesis. Functionally, sesquiterpene cyclase; part of the gene cluster that mediates the biosynthesis of astellolides, drimane-type sesquiterpene esters that show antimicrobial, anti-inflammatory, and anti-tumor activities. The first step in astellolide biosynthesis is performed by the sesquiterpene cyclase astC that catalyzes the formation of drimanyl pyrophosphate from farnesyl pyrophosphate. Drimanyl pyrophosphate is then dephosphorylated by the sesquiterpene phosphatase astI to produce drimanyl monophosphate which is further dephosphorylated to drim-8-ene-11-ol by atsK. Drim-8-ene-11-ol is converted to confertifolin, probably by the cytochrome P450 monooxygenase astD and/or the dehydrogenase astE. The cytochrome P450 monooxygenases astB, astF and astJ then hydroxylate confertifolin at C6, C14, or C15 to form trihydroxy confertifolin. The nonribosomal peptide synthetase astA catalyzes ester bond formation between trihydroxy contifolin and benzoic acid (BA) or 4-hydroxy benzoic acid (4HBA), leading to the formation of dideacetyl astellolides A and B, respectively. Finally, the O-acetyltransferase astG converts dideacetyl astellolides A and B into deacetyl astellolides A and B. The protein is Sesquiterpene cyclase astC of Aspergillus oryzae (strain ATCC 42149 / RIB 40) (Yellow koji mold).